A 216-amino-acid chain; its full sequence is Large ribosomal subunit protein bL25 (216 aa).

A disordered region spans residues 191-216 (LVSAESEEDEDAPAADEVPATEVSEE). The span at 195–204 (ESEEDEDAPA) shows a compositional bias: acidic residues.

This sequence belongs to the bacterial ribosomal protein bL25 family. CTC subfamily. As to quaternary structure, part of the 50S ribosomal subunit; part of the 5S rRNA/L5/L18/L25 subcomplex. Contacts the 5S rRNA. Binds to the 5S rRNA independently of L5 and L18.

This is one of the proteins that binds to the 5S RNA in the ribosome where it forms part of the central protuberance. The polypeptide is Large ribosomal subunit protein bL25 (Jannaschia sp. (strain CCS1)).